The sequence spans 364 residues: MQQLPIEKYSELLTKKQQKLTALLAPFNAPELSVFVSPVQNYRMRAEFRVWHDKGDLYHIMFNQQTKQRYRVDCFPIASLLINRMMENLIPLLKEQEILTKKLFQIDYLSTLSNKIIVSLLYHKTLTEEWQAAAQALKVRLEKLDFDVQIVGRATKQKICLERDYADEVLPVNGRNYVYRQIENSFTQPNAAVNCKMLEWAIGCTKNSSGDLLELYCGNGNFSIALAQNFRKVLATEIAKPSVAAAQFNIAENGIDNLQIIRMSAEEFTQAMNGVREFNRLKGIDLKSYECNTIFVDPPRAGLDPDTVKLVQNYDRILYISCNPNTLCNNLTELTKTHRIEKAALFDQFPYTDHMESGVWLIRK.

Positions 188, 216, 221, 237, and 297 each coordinate S-adenosyl-L-methionine. The Nucleophile role is filled by cysteine 322. The active-site Proton acceptor is the glutamate 356.

It belongs to the class I-like SAM-binding methyltransferase superfamily. RNA M5U methyltransferase family. TrmA subfamily.

The catalysed reaction is uridine(54) in tRNA + S-adenosyl-L-methionine = 5-methyluridine(54) in tRNA + S-adenosyl-L-homocysteine + H(+). The enzyme catalyses uridine(341) in tmRNA + S-adenosyl-L-methionine = 5-methyluridine(341) in tmRNA + S-adenosyl-L-homocysteine + H(+). Dual-specificity methyltransferase that catalyzes the formation of 5-methyluridine at position 54 (m5U54) in all tRNAs, and that of position 341 (m5U341) in tmRNA (transfer-mRNA). In Mannheimia succiniciproducens (strain KCTC 0769BP / MBEL55E), this protein is tRNA/tmRNA (uracil-C(5))-methyltransferase.